Here is a 1368-residue protein sequence, read N- to C-terminus: DNA-directed RNA polymerase subunit beta (1368 aa).

It belongs to the RNA polymerase beta chain family. In terms of assembly, the RNAP catalytic core consists of 2 alpha, 1 beta, 1 beta' and 1 omega subunit. When a sigma factor is associated with the core the holoenzyme is formed, which can initiate transcription.

The catalysed reaction is RNA(n) + a ribonucleoside 5'-triphosphate = RNA(n+1) + diphosphate. Functionally, DNA-dependent RNA polymerase catalyzes the transcription of DNA into RNA using the four ribonucleoside triphosphates as substrates. The protein is DNA-directed RNA polymerase subunit beta of Legionella pneumophila (strain Lens).